Reading from the N-terminus, the 298-residue chain is GTPase Era (298 aa).

The Era-type G domain occupies 3–170 (KSGFVAILGR…VQLLKDNLEE (168 aa)). The tract at residues 11–18 (GRPNVGKS) is G1. 11–18 (GRPNVGKS) contributes to the GTP binding site. Residues 37-41 (QTTRN) form a G2 region. Residues 58 to 61 (DTPG) form a G3 region. Residues 58-62 (DTPGI) and 120-123 (NKID) each bind GTP. Positions 120–123 (NKID) are G4. The G5 stretch occupies residues 149-151 (ISA). Residues 201–279 (TQQEVPHSVA…YLETWVKVKK (79 aa)) form the KH type-2 domain.

This sequence belongs to the TRAFAC class TrmE-Era-EngA-EngB-Septin-like GTPase superfamily. Era GTPase family. As to quaternary structure, monomer.

The protein localises to the cytoplasm. Its subcellular location is the cell membrane. Its function is as follows. An essential GTPase that binds both GDP and GTP, with rapid nucleotide exchange. Plays a role in 16S rRNA processing and 30S ribosomal subunit biogenesis and possibly also in cell cycle regulation and energy metabolism. This Streptococcus equi subsp. equi (strain 4047) protein is GTPase Era.